The chain runs to 151 residues: Extracellular globin-4 (151 aa).

The 146-residue stretch at 6-151 folds into the Globin domain; sequence CCSYEDRREI…LVARIAKDLP (146 aa). Cysteine 7 and cysteine 138 are joined by a disulfide. Histidine 101 lines the heme b pocket.

It belongs to the globin family. The extracellular hemoglobin of the earthworm consists of 12 subunits that have a hexagonal bilayer structure with a molecular weight near 3.8 million. Each one-twelfth subunit is composed primarily of disulfide linked trimers (chains A, B, and C) and monomers (chain D).

It is found in the secreted. The protein is Extracellular globin-4 of Lumbricus terrestris (Common earthworm).